We begin with the raw amino-acid sequence, 171 residues long: Calcium-binding allergen Ole e 8 (171 aa).

4 EF-hand domains span residues 16-51 (QEPNEVQGVFNRFDANGDGKISGDELAGVLKALGSN), 52-87 (TSKEEIGRIMEEIDTDKDGFINVQEFAAFVKAETDP), 92-127 (GGENELKEAFELYDQDHNGLISSVELHKILTRLGER), and 128-163 (YAEHDCVEMIKSVDSDGDGYVSFEEFKKMMTNKSGN). Ca(2+)-binding residues include aspartate 29, asparagine 31, aspartate 33, lysine 35, glutamate 40, aspartate 65, aspartate 67, aspartate 69, glutamate 76, aspartate 105, aspartate 107, asparagine 109, glutamate 116, aspartate 141, aspartate 143, aspartate 145, tyrosine 147, and glutamate 152.

In terms of assembly, homodimer. As to expression, expressed in pollen.

The polypeptide is Calcium-binding allergen Ole e 8 (Olea europaea (Common olive)).